The primary structure comprises 212 residues: Thymidylate kinase (212 aa).

10–17 (GIDGCGKT) contacts ATP.

The protein belongs to the thymidylate kinase family.

It carries out the reaction dTMP + ATP = dTDP + ADP. In terms of biological role, phosphorylation of dTMP to form dTDP in both de novo and salvage pathways of dTTP synthesis. In Prochlorococcus marinus (strain MIT 9301), this protein is Thymidylate kinase.